The following is a 193-amino-acid chain: Molybdenum cofactor guanylyltransferase (193 aa).

GTP-binding positions include 8–10 (LAG), lysine 21, aspartate 67, and aspartate 98. Residue aspartate 98 participates in Mg(2+) binding.

Belongs to the MobA family. In terms of assembly, monomer. Requires Mg(2+) as cofactor.

Its subcellular location is the cytoplasm. The catalysed reaction is Mo-molybdopterin + GTP + H(+) = Mo-molybdopterin guanine dinucleotide + diphosphate. Functionally, transfers a GMP moiety from GTP to Mo-molybdopterin (Mo-MPT) cofactor (Moco or molybdenum cofactor) to form Mo-molybdopterin guanine dinucleotide (Mo-MGD) cofactor. In Cereibacter sphaeroides (Rhodobacter sphaeroides), this protein is Molybdenum cofactor guanylyltransferase.